Here is a 644-residue protein sequence, read N- to C-terminus: Macrolide export ATP-binding/permease protein MacB (644 aa).

Residues 4–242 form the ABC transporter domain; the sequence is IECKNINRYF…SNVGRIQEKA (239 aa). 40–47 contacts ATP; sequence GQSGSGKS. A run of 4 helical transmembrane segments spans residues 270–290, 524–544, 574–594, and 607–627; these read LLTMLGIIIGIASVVSVVALG, IALISLVVGGIGVMNIMLVSV, LICIIGGLVGVGLSAAVSLVF, and AASVIGAVACSTGIGIAFGFM.

This sequence belongs to the ABC transporter superfamily. Macrolide exporter (TC 3.A.1.122) family. As to quaternary structure, homodimer.

It localises to the cell inner membrane. Functionally, non-canonical ABC transporter that contains transmembrane domains (TMD), which form a pore in the inner membrane, and an ATP-binding domain (NBD), which is responsible for energy generation. Overexpression confers resistance against macrolides. In Neisseria gonorrhoeae, this protein is Macrolide export ATP-binding/permease protein MacB.